The sequence spans 202 residues: LexA repressor (202 aa).

Positions 28–48 (RAEIAQRLGFRSPNAAEEHLK) form a DNA-binding region, H-T-H motif. Active-site for autocatalytic cleavage activity residues include S119 and K156.

It belongs to the peptidase S24 family. In terms of assembly, homodimer.

It carries out the reaction Hydrolysis of Ala-|-Gly bond in repressor LexA.. Represses a number of genes involved in the response to DNA damage (SOS response), including recA and lexA. Binds to the 16 bp palindromic sequence 5'-CTGTATATATATACAG-3'. In the presence of single-stranded DNA, RecA interacts with LexA causing an autocatalytic cleavage which disrupts the DNA-binding part of LexA, leading to derepression of the SOS regulon and eventually DNA repair. This Edwardsiella ictaluri (strain 93-146) protein is LexA repressor.